Reading from the N-terminus, the 44-residue chain is Pandinin-1 (44 aa).

Expressed by the venom gland.

The protein localises to the secreted. Its subcellular location is the target cell membrane. Functionally, disrupts cell membranes through formation of pores. Strong antimicrobial activity against Gram-positive bacteria B.subtilis, S.epidermidis, E.faecalis and S.aureus. Less active against Gram-negative bacteria P.aeruginosa and E.coli. Has no antifungal or hemolytic activity. In Pandinus imperator (Emperor scorpion), this protein is Pandinin-1.